The sequence spans 181 residues: Proteinase inhibitor B (181 aa).

The N-terminal stretch at 1-24 is a signal peptide; that stretch reads MAASNALLLISGALLISLAVLCQG. 3 cysteine pairs are disulfide-bonded: Cys67–Cys113, Cys134–Cys143, and Cys136–Cys139.

The protein belongs to the protease inhibitor I3 (leguminous Kunitz-type inhibitor) family.

The protein resides in the secreted. Possesses two reactive sites. Inhibits two molecules of trypsin simultaneously. Inhibits efficiently kallikrein, but chymotrypsin weakly. This is Proteinase inhibitor B from Sagittaria sagittifolia (Arrowhead).